Reading from the N-terminus, the 812-residue chain is INO80 complex subunit D (812 aa).

2 disordered regions span residues 521-573 (NSRK…LCMP) and 581-600 (EVSS…ELPD). Over residues 524–558 (KVQHHQQRKPRKKTKPPALTKKTKKKRRRGPRRPQ) the composition is skewed to basic residues. Residues 585 to 595 (IRSPSTPNLST) are compositionally biased toward polar residues.

The protein belongs to the INO80D family. In terms of assembly, component of the chromatin-remodeling INO80 complex.

It localises to the nucleus. In terms of biological role, putative regulatory component of the chromatin remodeling INO80 complex which is involved in transcriptional regulation, DNA replication and probably DNA repair. The protein is INO80 complex subunit D of Xenopus laevis (African clawed frog).